The chain runs to 167 residues: Endoribonuclease YbeY (167 aa).

Zn(2+) is bound by residues His-126, His-130, and His-136.

This sequence belongs to the endoribonuclease YbeY family. It depends on Zn(2+) as a cofactor.

It is found in the cytoplasm. Single strand-specific metallo-endoribonuclease involved in late-stage 70S ribosome quality control and in maturation of the 3' terminus of the 16S rRNA. The sequence is that of Endoribonuclease YbeY from Novosphingobium aromaticivorans (strain ATCC 700278 / DSM 12444 / CCUG 56034 / CIP 105152 / NBRC 16084 / F199).